The chain runs to 336 residues: N6-methyladenosine RNA methyltransferase MTA1 (336 aa).

Residues 61 to 83 (LISSEPPHLPFKTPEPKAGSGGL) form a disordered region.

This sequence belongs to the MT-A70-like family.

It catalyses the reaction an adenosine in mRNA + S-adenosyl-L-methionine = an N(6)-methyladenosine in mRNA + S-adenosyl-L-homocysteine + H(+). Functionally, N6-methyladenosine RNA methyltransferase that plays a crucial role in fungal phenotypic traits, virulence, and stress tolerance. Mediates the methylation of mRNAs to produce N6-methyladenosine (m6A)-containing mRNAs. M6A is a modification present at internal sites of mRNAs and some non-coding RNAs and plays a role in mRNA stability and processing. Mediates specifically acid phosphatase APHA mRNA stability through a YTHDF1-dependent m6A modification of the A1306, A1341, and A1666 key methylation modification sites. Also mediates the stability of the transcription factor ZAP1 mRNA via modification of residue A1935 localized in the 3'UTR. In Cryphonectria parasitica (strain ATCC 38755 / EP155), this protein is N6-methyladenosine RNA methyltransferase MTA1.